Here is a 219-residue protein sequence, read N- to C-terminus: Phosphatidylserine decarboxylase proenzyme (219 aa).

Serine 182 (schiff-base intermediate with substrate; via pyruvic acid) is an active-site residue. Residue serine 182 is modified to Pyruvic acid (Ser); by autocatalysis.

The protein belongs to the phosphatidylserine decarboxylase family. PSD-A subfamily. In terms of assembly, heterodimer of a large membrane-associated beta subunit and a small pyruvoyl-containing alpha subunit. The cofactor is pyruvate. Is synthesized initially as an inactive proenzyme. Formation of the active enzyme involves a self-maturation process in which the active site pyruvoyl group is generated from an internal serine residue via an autocatalytic post-translational modification. Two non-identical subunits are generated from the proenzyme in this reaction, and the pyruvate is formed at the N-terminus of the alpha chain, which is derived from the carboxyl end of the proenzyme. The post-translation cleavage follows an unusual pathway, termed non-hydrolytic serinolysis, in which the side chain hydroxyl group of the serine supplies its oxygen atom to form the C-terminus of the beta chain, while the remainder of the serine residue undergoes an oxidative deamination to produce ammonia and the pyruvoyl prosthetic group on the alpha chain.

The protein localises to the cell membrane. The enzyme catalyses a 1,2-diacyl-sn-glycero-3-phospho-L-serine + H(+) = a 1,2-diacyl-sn-glycero-3-phosphoethanolamine + CO2. It participates in phospholipid metabolism; phosphatidylethanolamine biosynthesis; phosphatidylethanolamine from CDP-diacylglycerol: step 2/2. In terms of biological role, catalyzes the formation of phosphatidylethanolamine (PtdEtn) from phosphatidylserine (PtdSer). This chain is Phosphatidylserine decarboxylase proenzyme, found in Chlorobium phaeovibrioides (strain DSM 265 / 1930) (Prosthecochloris vibrioformis (strain DSM 265)).